Consider the following 55-residue polypeptide: U2-theraphotoxin-Cg1a (55 aa).

Residues 1-19 constitute a propeptide that is removed on maturation; sequence DSPAWLKSMERIFQSEERE. 3 disulfides stabilise this stretch: C20–C34, C27–C39, and C33–C47.

This sequence belongs to the neurotoxin 10 (Hwtx-1) family. 06 (F4b) subfamily. As to expression, expressed by the venom gland.

The protein resides in the secreted. Its function is as follows. Probable ion channel inhibitor. The polypeptide is U2-theraphotoxin-Cg1a (Chilobrachys guangxiensis (Chinese earth tiger tarantula)).